The primary structure comprises 351 residues: Soluble TNF receptor II (351 aa).

A signal peptide spans M1–G19. TNFR-Cys repeat units follow at residues K31–C67 and P69–C110. Intrachain disulfides connect C32-C43, C44-C57, C47-C67, C70-C85, C88-C102, and C92-C110. 3 N-linked (GlcNAc...) asparagine; by host glycosylation sites follow: N103, N191, and N250.

The protein belongs to the orthopoxvirus OPG002 family.

It is found in the secreted. Inhibits host immune defense by binding to host TNF and various chemokines in the extracellular space. Binds host CC chemokines (beta chemokines) and CXC chemokines (alpha chemokines). This is Soluble TNF receptor II (OPG002) from Bos taurus (Bovine).